Reading from the N-terminus, the 239-residue chain is tRNA (guanine-N(7)-)-methyltransferase (239 aa).

Residues glutamate 69, glutamate 94, aspartate 121, and aspartate 144 each coordinate S-adenosyl-L-methionine. The active site involves aspartate 144. Residue lysine 148 coordinates substrate. The tract at residues 150 to 155 is interaction with RNA; the sequence is RHNKRR. Substrate is bound by residues aspartate 180 and 217 to 220; that span reads TKFE.

This sequence belongs to the class I-like SAM-binding methyltransferase superfamily. TrmB family. Monomer.

It carries out the reaction guanosine(46) in tRNA + S-adenosyl-L-methionine = N(7)-methylguanosine(46) in tRNA + S-adenosyl-L-homocysteine. It participates in tRNA modification; N(7)-methylguanine-tRNA biosynthesis. Functionally, catalyzes the formation of N(7)-methylguanine at position 46 (m7G46) in tRNA. In Klebsiella pneumoniae subsp. pneumoniae (strain ATCC 700721 / MGH 78578), this protein is tRNA (guanine-N(7)-)-methyltransferase.